A 568-amino-acid chain; its full sequence is Proline--tRNA ligase (568 aa).

Belongs to the class-II aminoacyl-tRNA synthetase family. ProS type 1 subfamily. As to quaternary structure, homodimer.

The protein localises to the cytoplasm. The enzyme catalyses tRNA(Pro) + L-proline + ATP = L-prolyl-tRNA(Pro) + AMP + diphosphate. Catalyzes the attachment of proline to tRNA(Pro) in a two-step reaction: proline is first activated by ATP to form Pro-AMP and then transferred to the acceptor end of tRNA(Pro). As ProRS can inadvertently accommodate and process non-cognate amino acids such as alanine and cysteine, to avoid such errors it has two additional distinct editing activities against alanine. One activity is designated as 'pretransfer' editing and involves the tRNA(Pro)-independent hydrolysis of activated Ala-AMP. The other activity is designated 'posttransfer' editing and involves deacylation of mischarged Ala-tRNA(Pro). The misacylated Cys-tRNA(Pro) is not edited by ProRS. The chain is Proline--tRNA ligase from Chromobacterium violaceum (strain ATCC 12472 / DSM 30191 / JCM 1249 / CCUG 213 / NBRC 12614 / NCIMB 9131 / NCTC 9757 / MK).